A 134-amino-acid polypeptide reads, in one-letter code: Outer membrane lipoprotein RcsF (134 aa).

The signal sequence occupies residues 1–15 (MRALPICLVALMLSG). Cys16 is lipidated: N-palmitoyl cysteine. Residue Cys16 is the site of S-diacylglycerol cysteine attachment. Disordered stretches follow at residues 22–48 (SPVE…RATP) and 67–88 (GEVS…IPTA). Positions 72–82 (DSCQASNQDSP) are enriched in polar residues. 2 disulfides stabilise this stretch: Cys74/Cys118 and Cys109/Cys124.

It belongs to the RcsF family.

The protein localises to the cell outer membrane. Functionally, essential component of the Rcs signaling system, which controls transcription of numerous genes. Plays a role in signal transduction from the cell surface to the histidine kinase RcsC. May detect outer membrane defects. The polypeptide is Outer membrane lipoprotein RcsF (Escherichia coli O6:H1 (strain CFT073 / ATCC 700928 / UPEC)).